Consider the following 267-residue polypeptide: 3-methyl-2-oxobutanoate hydroxymethyltransferase (267 aa).

Mg(2+) is bound by residues aspartate 45 and aspartate 84. Residues 45–46 (DS), aspartate 84, and lysine 113 each bind 3-methyl-2-oxobutanoate. Glutamate 115 serves as a coordination point for Mg(2+). Glutamate 182 acts as the Proton acceptor in catalysis.

Belongs to the PanB family. Homodecamer; pentamer of dimers. Requires Mg(2+) as cofactor.

It localises to the cytoplasm. It catalyses the reaction 3-methyl-2-oxobutanoate + (6R)-5,10-methylene-5,6,7,8-tetrahydrofolate + H2O = 2-dehydropantoate + (6S)-5,6,7,8-tetrahydrofolate. It functions in the pathway cofactor biosynthesis; coenzyme A biosynthesis. Functionally, catalyzes the reversible reaction in which hydroxymethyl group from 5,10-methylenetetrahydrofolate is transferred onto alpha-ketoisovalerate to form ketopantoate. The polypeptide is 3-methyl-2-oxobutanoate hydroxymethyltransferase (Saccharolobus islandicus (strain Y.G.57.14 / Yellowstone #1) (Sulfolobus islandicus)).